The primary structure comprises 485 residues: Proline--tRNA ligase (485 aa).

It belongs to the class-II aminoacyl-tRNA synthetase family. ProS type 3 subfamily. Homodimer.

It localises to the cytoplasm. The catalysed reaction is tRNA(Pro) + L-proline + ATP = L-prolyl-tRNA(Pro) + AMP + diphosphate. In terms of biological role, catalyzes the attachment of proline to tRNA(Pro) in a two-step reaction: proline is first activated by ATP to form Pro-AMP and then transferred to the acceptor end of tRNA(Pro). This chain is Proline--tRNA ligase, found in Methanopyrus kandleri (strain AV19 / DSM 6324 / JCM 9639 / NBRC 100938).